The primary structure comprises 63 residues: Protein DsrB (63 aa).

The protein belongs to the DsrB family.

The protein is Protein DsrB of Yersinia enterocolitica serotype O:8 / biotype 1B (strain NCTC 13174 / 8081).